The sequence spans 116 residues: Large ribosomal subunit protein bL19 (116 aa).

Belongs to the bacterial ribosomal protein bL19 family.

Functionally, this protein is located at the 30S-50S ribosomal subunit interface and may play a role in the structure and function of the aminoacyl-tRNA binding site. The sequence is that of Large ribosomal subunit protein bL19 from Shewanella loihica (strain ATCC BAA-1088 / PV-4).